The primary structure comprises 108 residues: T-cell acute lymphocytic leukemia protein 2 homolog (108 aa).

Residues 2–54 (TRKIFTNTRERWRQQSVNNAFAKLRKLIPTHPPDKKLSKNETLRLAMRYINFL) form the bHLH domain. Residues 76–108 (GLFPPKTRLPDEDDRTLLNDYRVPSPGPSHGAP) form a disordered region.

In Mus musculus (Mouse), this protein is T-cell acute lymphocytic leukemia protein 2 homolog (Tal2).